Consider the following 310-residue polypeptide: GMP synthase [glutamine-hydrolyzing] subunit B (310 aa).

The GMPS ATP-PPase domain occupies 1 to 187 (MSFSDYISRI…LGLPTDIQPF (187 aa)). Residue 27–33 (SGGQDSS) coordinates ATP.

Heterodimer composed of a glutamine amidotransferase subunit (A) and a GMP-binding subunit (B).

The enzyme catalyses XMP + L-glutamine + ATP + H2O = GMP + L-glutamate + AMP + diphosphate + 2 H(+). It functions in the pathway purine metabolism; GMP biosynthesis; GMP from XMP (L-Gln route): step 1/1. Functionally, catalyzes the synthesis of GMP from XMP. The sequence is that of GMP synthase [glutamine-hydrolyzing] subunit B (guaAB) from Thermoplasma volcanium (strain ATCC 51530 / DSM 4299 / JCM 9571 / NBRC 15438 / GSS1).